We begin with the raw amino-acid sequence, 184 residues long: ADP-ribosylation factor-like protein 2 (184 aa).

Gly2 carries N-myristoyl glycine lipidation. Position 23 to 30 (23 to 30 (GLDNAGKT)) interacts with GTP. Ser45 is subject to Phosphoserine. GTP-binding positions include 66-70 (DVGGQ) and Gly68. Residue Lys71 forms a Glycyl lysine isopeptide (Lys-Gly) (interchain with G-Cter in ubiquitin) linkage. GTP is bound at residue 125 to 128 (NKQD).

This sequence belongs to the small GTPase superfamily. Arf family. As to quaternary structure, found in a complex with ARL2, ARL2BP and SLC25A6. Found in a complex with at least ARL2, PPP2CB, PPP2R1A, PPP2R2A, PPP2R5E and TBCD. Found in a complex with ARL2, ARL2BP and SLC25A4. The GTP-bound form interacts with PDE6D. Interacts with ELMOD2. The GTP-bound form interacts with ARL2BP. Interacts, preferentially in its GDP-bound state, with TBCD. Interacts with UNC119. In terms of processing, not N-myristoylated.

It localises to the mitochondrion intermembrane space. It is found in the cytoplasm. Its subcellular location is the cytoskeleton. The protein localises to the microtubule organizing center. The protein resides in the centrosome. It localises to the nucleus. Its function is as follows. Small GTP-binding protein which cycles between an inactive GDP-bound and an active GTP-bound form, and the rate of cycling is regulated by guanine nucleotide exchange factors (GEF) and GTPase-activating proteins (GAP). GTP-binding protein that does not act as an allosteric activator of the cholera toxin catalytic subunit. Regulates formation of new microtubules and centrosome integrity. Prevents the TBCD-induced microtubule destruction. Participates in association with TBCD, in the disassembly of the apical junction complexes. Antagonizes the effect of TBCD on epithelial cell detachment and tight and adherens junctions disassembly. Together with ARL2, plays a role in the nuclear translocation, retention and transcriptional activity of STAT3. Component of a regulated secretory pathway involved in Ca(2+)-dependent release of acetylcholine. Required for normal progress through the cell cycle. Also regulates mitochondrial integrity and function. In Homo sapiens (Human), this protein is ADP-ribosylation factor-like protein 2 (ARL2).